Here is a 237-residue protein sequence, read N- to C-terminus: Leucyl/phenylalanyl-tRNA--protein transferase (237 aa).

The protein belongs to the L/F-transferase family.

Its subcellular location is the cytoplasm. It catalyses the reaction N-terminal L-lysyl-[protein] + L-leucyl-tRNA(Leu) = N-terminal L-leucyl-L-lysyl-[protein] + tRNA(Leu) + H(+). The enzyme catalyses N-terminal L-arginyl-[protein] + L-leucyl-tRNA(Leu) = N-terminal L-leucyl-L-arginyl-[protein] + tRNA(Leu) + H(+). The catalysed reaction is L-phenylalanyl-tRNA(Phe) + an N-terminal L-alpha-aminoacyl-[protein] = an N-terminal L-phenylalanyl-L-alpha-aminoacyl-[protein] + tRNA(Phe). Functionally, functions in the N-end rule pathway of protein degradation where it conjugates Leu, Phe and, less efficiently, Met from aminoacyl-tRNAs to the N-termini of proteins containing an N-terminal arginine or lysine. The polypeptide is Leucyl/phenylalanyl-tRNA--protein transferase (Shewanella baltica (strain OS155 / ATCC BAA-1091)).